The primary structure comprises 567 residues: Monodechloroaminopyrrolnitrin halogenase PrnC (567 aa).

It participates in antibiotic biosynthesis. Its function is as follows. Involved in the biosynthesis of the antifungal antibiotic pyrrolnitrin. Catalyzes the chlorination of monodechloroaminopyrrolnitrin (MDA) at the 3 position to form aminopyrrolnitrin (APRN). The chain is Monodechloroaminopyrrolnitrin halogenase PrnC (prnC) from Pseudomonas fluorescens.